The chain runs to 547 residues: Chaperonin GroEL (547 aa).

ATP-binding positions include 30–33 (TLGP), lysine 51, 87–91 (DGTTT), glycine 415, and aspartate 496.

The protein belongs to the chaperonin (HSP60) family. In terms of assembly, forms a cylinder of 14 subunits composed of two heptameric rings stacked back-to-back. Interacts with the co-chaperonin GroES.

It localises to the cytoplasm. It carries out the reaction ATP + H2O + a folded polypeptide = ADP + phosphate + an unfolded polypeptide.. Its function is as follows. Together with its co-chaperonin GroES, plays an essential role in assisting protein folding. The GroEL-GroES system forms a nano-cage that allows encapsulation of the non-native substrate proteins and provides a physical environment optimized to promote and accelerate protein folding. The polypeptide is Chaperonin GroEL (Chlorobaculum parvum (strain DSM 263 / NCIMB 8327) (Chlorobium vibrioforme subsp. thiosulfatophilum)).